A 211-amino-acid chain; its full sequence is Thiamine-phosphate synthase (211 aa).

4-amino-2-methyl-5-(diphosphooxymethyl)pyrimidine-binding positions include 37–41 (QYRDK) and asparagine 69. Residues aspartate 70 and aspartate 89 each contribute to the Mg(2+) site. Serine 108 lines the 4-amino-2-methyl-5-(diphosphooxymethyl)pyrimidine pocket. 135–137 (SPT) contacts 2-[(2R,5Z)-2-carboxy-4-methylthiazol-5(2H)-ylidene]ethyl phosphate. Lysine 138 serves as a coordination point for 4-amino-2-methyl-5-(diphosphooxymethyl)pyrimidine. Residues glycine 165 and 185–186 (LS) each bind 2-[(2R,5Z)-2-carboxy-4-methylthiazol-5(2H)-ylidene]ethyl phosphate.

It belongs to the thiamine-phosphate synthase family. Requires Mg(2+) as cofactor.

The enzyme catalyses 2-[(2R,5Z)-2-carboxy-4-methylthiazol-5(2H)-ylidene]ethyl phosphate + 4-amino-2-methyl-5-(diphosphooxymethyl)pyrimidine + 2 H(+) = thiamine phosphate + CO2 + diphosphate. It catalyses the reaction 2-(2-carboxy-4-methylthiazol-5-yl)ethyl phosphate + 4-amino-2-methyl-5-(diphosphooxymethyl)pyrimidine + 2 H(+) = thiamine phosphate + CO2 + diphosphate. The catalysed reaction is 4-methyl-5-(2-phosphooxyethyl)-thiazole + 4-amino-2-methyl-5-(diphosphooxymethyl)pyrimidine + H(+) = thiamine phosphate + diphosphate. Its pathway is cofactor biosynthesis; thiamine diphosphate biosynthesis; thiamine phosphate from 4-amino-2-methyl-5-diphosphomethylpyrimidine and 4-methyl-5-(2-phosphoethyl)-thiazole: step 1/1. In terms of biological role, condenses 4-methyl-5-(beta-hydroxyethyl)thiazole monophosphate (THZ-P) and 2-methyl-4-amino-5-hydroxymethyl pyrimidine pyrophosphate (HMP-PP) to form thiamine monophosphate (TMP). This Thiobacillus denitrificans (strain ATCC 25259 / T1) protein is Thiamine-phosphate synthase.